Reading from the N-terminus, the 157-residue chain is Protein-export protein SecB (157 aa).

The protein belongs to the SecB family. In terms of assembly, homotetramer, a dimer of dimers. One homotetramer interacts with 1 SecA dimer.

It localises to the cytoplasm. One of the proteins required for the normal export of preproteins out of the cell cytoplasm. It is a molecular chaperone that binds to a subset of precursor proteins, maintaining them in a translocation-competent state. It also specifically binds to its receptor SecA. In Rhodopseudomonas palustris (strain TIE-1), this protein is Protein-export protein SecB.